We begin with the raw amino-acid sequence, 206 residues long: Cytochrome c oxidase assembly protein CtaG (206 aa).

Over 1–17 (MPEVQPSALPKPAPRLG) the chain is Cytoplasmic. A helical; Signal-anchor for type II membrane protein membrane pass occupies residues 18–40 (RDAAVASICGFVVALMVGASFAA). At 41–206 (VPFYDWFCRT…GEPDQRKGNL (166 aa)) the chain is on the periplasmic side.

Belongs to the COX11/CtaG family.

It is found in the cell inner membrane. Its function is as follows. Exerts its effect at some terminal stage of cytochrome c oxidase synthesis, probably by being involved in the insertion of the copper B into subunit I. This chain is Cytochrome c oxidase assembly protein CtaG, found in Rhodopseudomonas palustris (strain BisB5).